The following is a 355-amino-acid chain: Protein-glutamate methylesterase/protein-glutamine glutaminase 3 (355 aa).

The Response regulatory domain maps to 8–126 (RVLVVDDSPT…AEELRRWGKE (119 aa)). Asp-59 is modified (4-aspartylphosphate). Positions 152-337 (PPTGARVDIF…LASMPELILQ (186 aa)) constitute a CheB-type methylesterase domain. Residues Ser-166, His-193, and Asp-284 contribute to the active site.

Belongs to the CheB family. In terms of processing, phosphorylated by CheA. Phosphorylation of the N-terminal regulatory domain activates the methylesterase activity.

Its subcellular location is the cytoplasm. The enzyme catalyses [protein]-L-glutamate 5-O-methyl ester + H2O = L-glutamyl-[protein] + methanol + H(+). It carries out the reaction L-glutaminyl-[protein] + H2O = L-glutamyl-[protein] + NH4(+). Involved in chemotaxis. Part of a chemotaxis signal transduction system that modulates chemotaxis in response to various stimuli. Catalyzes the demethylation of specific methylglutamate residues introduced into the chemoreceptors (methyl-accepting chemotaxis proteins or MCP) by CheR. Also mediates the irreversible deamidation of specific glutamine residues to glutamic acid. The polypeptide is Protein-glutamate methylesterase/protein-glutamine glutaminase 3 (Myxococcus xanthus (strain DK1622)).